We begin with the raw amino-acid sequence, 586 residues long: CTP synthase (586 aa).

An amidoligase domain region spans residues 1–265 (MVRFIFVTGG…ENKVLNFFNI (265 aa)). Ser-13 lines the CTP pocket. Ser-13 provides a ligand contact to UTP. ATP-binding positions include 14-19 (SLGKGI) and Asp-71. Residues Asp-71 and Glu-139 each contribute to the Mg(2+) site. CTP contacts are provided by residues 146 to 148 (DIE), 186 to 191 (KTKPTQ), and Lys-222. UTP contacts are provided by residues 186 to 191 (KTKPTQ) and Lys-222. Residues 290–582 (KIAIITKYHK…IKATIEYNKS (293 aa)) form the Glutamine amidotransferase type-1 domain. Position 352 (Gly-352) interacts with L-glutamine. Residue Cys-379 is the Nucleophile; for glutamine hydrolysis of the active site. L-glutamine-binding positions include 380–383 (FGMQ) and Glu-403. One can recognise an RPE1 insert domain in the interval 429–473 (AHISKCTYSEAFECDASTVYTNIHEDSNNLSTDKLQIETNFRNMS). Arg-510 serves as a coordination point for L-glutamine. Residues His-555 and Glu-557 contribute to the active site.

This sequence belongs to the CTP synthase family. In terms of assembly, homotetramer.

The enzyme catalyses UTP + L-glutamine + ATP + H2O = CTP + L-glutamate + ADP + phosphate + 2 H(+). It catalyses the reaction L-glutamine + H2O = L-glutamate + NH4(+). The catalysed reaction is UTP + NH4(+) + ATP = CTP + ADP + phosphate + 2 H(+). Its pathway is pyrimidine metabolism; CTP biosynthesis via de novo pathway; CTP from UDP: step 2/2. Allosterically activated by GTP, when glutamine is the substrate; GTP has no effect on the reaction when ammonia is the substrate. The allosteric effector GTP functions by stabilizing the protein conformation that binds the tetrahedral intermediate(s) formed during glutamine hydrolysis. Inhibited by the product CTP, via allosteric rather than competitive inhibition. Catalyzes the ATP-dependent amination of UTP to CTP with either L-glutamine or ammonia as the source of nitrogen. Regulates intracellular CTP levels through interactions with the four ribonucleotide triphosphates. This is CTP synthase from Rickettsia prowazekii (strain Madrid E).